The sequence spans 288 residues: MFATKTVLFIAVVSLLGTFSSAAVDTFIYGGCSQEKYFPGSPYESNVNSLLTSFVSSASLYTYNNFTTNGISGDSSSVYGLYQCRGDLSSGSGDCARCVARAVSRLGSLCAMASGGALQLEGCFVKYDNTTFLGVEDKTVVVRRCGPPVGYNSDEMTRRDSVVGSLAASSGGSYRVGVSGELQGVAQCTGDLSATECQDCLMEAIGRLRTDCGGAAWGDVYLAKCYARYSARGGHSRANGYGGNRNNNDDDEIEKTLAIIVGLIAGVTLLVVFLSFMAKSCERGKGGK.

The N-terminal stretch at 1–22 (MFATKTVLFIAVVSLLGTFSSA) is a signal peptide. At 23 to 256 (AVDTFIYGGC…NNDDDEIEKT (234 aa)) the chain is on the extracellular side. Gnk2-homologous domains are found at residues 25-132 (DTFI…NTTF) and 137-234 (DKTV…ARGG). 6 disulfide bridges follow: Cys-32–Cys-110, Cys-84–Cys-95, Cys-98–Cys-123, Cys-145–Cys-212, Cys-188–Cys-197, and Cys-200–Cys-225. Residues 257-277 (LAIIVGLIAGVTLLVVFLSFM) traverse the membrane as a helical segment. The segment at 257–277 (LAIIVGLIAGVTLLVVFLSFM) is necessary and sufficient for plasmodesmal targeting. Over 278-288 (AKSCERGKGGK) the chain is Cytoplasmic.

The protein belongs to the cysteine-rich repeat secretory protein family. Plasmodesmata-located proteins (PDLD) subfamily. As to quaternary structure, (Microbial infection) Interacts with Grapevine fanleaf virus (GFLV) 2B-MP. Highly expressed in inflorescence silique (at mRNA level).

The protein resides in the cell membrane. It is found in the cell junction. Its subcellular location is the plasmodesma. Functionally, modulates cell-to-cell trafficking. This is Plasmodesmata-located protein 6 from Arabidopsis thaliana (Mouse-ear cress).